A 296-amino-acid polypeptide reads, in one-letter code: 4-hydroxy-tetrahydrodipicolinate synthase (296 aa).

T47 serves as a coordination point for pyruvate. Catalysis depends on Y136, which acts as the Proton donor/acceptor. K164 acts as the Schiff-base intermediate with substrate in catalysis. A pyruvate-binding site is contributed by V206.

The protein belongs to the DapA family. Homotetramer; dimer of dimers.

The protein localises to the cytoplasm. The enzyme catalyses L-aspartate 4-semialdehyde + pyruvate = (2S,4S)-4-hydroxy-2,3,4,5-tetrahydrodipicolinate + H2O + H(+). It functions in the pathway amino-acid biosynthesis; L-lysine biosynthesis via DAP pathway; (S)-tetrahydrodipicolinate from L-aspartate: step 3/4. Its function is as follows. Catalyzes the condensation of (S)-aspartate-beta-semialdehyde [(S)-ASA] and pyruvate to 4-hydroxy-tetrahydrodipicolinate (HTPA). This chain is 4-hydroxy-tetrahydrodipicolinate synthase, found in Thermosynechococcus vestitus (strain NIES-2133 / IAM M-273 / BP-1).